Reading from the N-terminus, the 83-residue chain is Cell division topological specificity factor (83 aa).

It belongs to the MinE family.

Its function is as follows. Prevents the cell division inhibition by proteins MinC and MinD at internal division sites while permitting inhibition at polar sites. This ensures cell division at the proper site by restricting the formation of a division septum at the midpoint of the long axis of the cell. In Buchnera aphidicola subsp. Baizongia pistaciae (strain Bp), this protein is Cell division topological specificity factor.